Reading from the N-terminus, the 657-residue chain is Endoplasmic reticulum chaperone BiP homolog (657 aa).

Positions 1 to 17 are cleaved as a signal peptide; that stretch reads MKVFSLILIAFVANAYC. Residues 38–41, K99, 229–231, 295–302, and 366–369 contribute to the ATP site; these read GTTY, GGT, EKAKRALS, and GSTR. The tract at residues 128–282 is nucleotide-binding (NBD); sequence KPNVEVKVGS…KKKSGKDLRK (155 aa). The interval 402 to 502 is substrate-binding (SBD); the sequence is VQAGVIGGVE…PRGVPQIEVT (101 aa). The segment at 607–657 is disordered; that stretch reads LGSNQDASTEENKEQKKELESVVQPIVSKLYSAGGQGEQASEEPSEDHDEL. Positions 616-626 are enriched in basic and acidic residues; sequence EENKEQKKELE. Over residues 646-657 the composition is skewed to acidic residues; it reads ASEEPSEDHDEL. Residues 654 to 657 carry the Prevents secretion from ER motif; that stretch reads HDEL.

This sequence belongs to the heat shock protein 70 family.

Its subcellular location is the endoplasmic reticulum lumen. The catalysed reaction is ATP + H2O = ADP + phosphate + H(+). Its activity is regulated as follows. The chaperone activity is regulated by ATP-induced allosteric coupling of the nucleotide-binding (NBD) and substrate-binding (SBD) domains. In the ADP-bound and nucleotide-free (apo) states, the two domains have little interaction. In contrast, in the ATP-bound state the two domains are tightly coupled, which results in drastically accelerated kinetics in both binding and release of polypeptide substrates. J domain-containing co-chaperones stimulate the ATPase activity and are required for efficient substrate recognition. Functionally, endoplasmic reticulum chaperone that plays a key role in protein folding and quality control in the endoplasmic reticulum lumen. Required for ER dynamics during the first embryonic cell divisions. Specifically, controls ER transition into sheet-like structures at the onset of mitosis, possibly by regulating homotypic membrane fusion. This is Endoplasmic reticulum chaperone BiP homolog (hsp-4) from Caenorhabditis elegans.